Consider the following 500-residue polypeptide: Protein nucleotidyltransferase YdiU (500 aa).

Residues Gly96, Gly98, Arg99, Lys119, Asp131, Gly132, Arg182, and Arg189 each contribute to the ATP site. Asp258 serves as the catalytic Proton acceptor. Asn259 and Asp268 together coordinate Mg(2+). Asp268 contributes to the ATP binding site.

This sequence belongs to the SELO family. Mg(2+) is required as a cofactor. Requires Mn(2+) as cofactor.

It catalyses the reaction L-seryl-[protein] + ATP = 3-O-(5'-adenylyl)-L-seryl-[protein] + diphosphate. It carries out the reaction L-threonyl-[protein] + ATP = 3-O-(5'-adenylyl)-L-threonyl-[protein] + diphosphate. The catalysed reaction is L-tyrosyl-[protein] + ATP = O-(5'-adenylyl)-L-tyrosyl-[protein] + diphosphate. The enzyme catalyses L-histidyl-[protein] + UTP = N(tele)-(5'-uridylyl)-L-histidyl-[protein] + diphosphate. It catalyses the reaction L-seryl-[protein] + UTP = O-(5'-uridylyl)-L-seryl-[protein] + diphosphate. It carries out the reaction L-tyrosyl-[protein] + UTP = O-(5'-uridylyl)-L-tyrosyl-[protein] + diphosphate. In terms of biological role, nucleotidyltransferase involved in the post-translational modification of proteins. It can catalyze the addition of adenosine monophosphate (AMP) or uridine monophosphate (UMP) to a protein, resulting in modifications known as AMPylation and UMPylation. In Rhizobium etli (strain ATCC 51251 / DSM 11541 / JCM 21823 / NBRC 15573 / CFN 42), this protein is Protein nucleotidyltransferase YdiU.